Here is a 1197-residue protein sequence, read N- to C-terminus: SRC kinase signaling inhibitor 1 (1197 aa).

The span at 19–45 (AEGRARSPREEVGPRDPGGRGEPDPER) shows a compositional bias: basic and acidic residues. The interval 19 to 80 (AEGRARSPRE…GGSGGRRFSN (62 aa)) is disordered. Ser-47 and Ser-52 each carry phosphoserine. The span at 65-75 (LGGGGSGGSGG) shows a compositional bias: gly residues. Ser-79 carries the post-translational modification Phosphoserine. Thr-86 is modified (phosphothreonine). Residues Ser-87, Ser-98, Ser-178, Ser-200, Ser-204, Ser-214, and Ser-260 each carry the phosphoserine modification. Tyr-276 carries the post-translational modification Phosphotyrosine. The disordered stretch occupies residues 319 to 415 (ASRESSPTRR…RRDVKPDEDL (97 aa)). Residues 321–331 (RESSPTRRLNN) show a composition bias toward polar residues. The span at 332 to 341 (LSPASHLASS) shows a compositional bias: low complexity. Ser-333, Ser-342, and Ser-359 each carry phosphoserine. The segment covering 348–366 (PSGLPSGLPSGSPSRSRLS) has biased composition (low complexity). 2 positions are modified to omega-N-methylarginine: Arg-364 and Arg-371. Phosphoserine occurs at positions 378, 397, and 399. A compositionally biased stretch (polar residues) spans 391 to 400 (PTSQGVSPSP). Over residues 404 to 415 (LERRDVKPDEDL) the composition is skewed to basic and acidic residues. The residue at position 431 (Tyr-431) is a Phosphotyrosine. The segment at 501–676 (GFRLPPSSPQ…AVSSTPAGQP (176 aa)) is disordered. Residues 520–531 (GGPPPPHSPYSG) show a composition bias toward pro residues. Phosphoserine is present on residues Ser-527, Ser-530, and Ser-534. Arg-535 carries the post-translational modification Omega-N-methylarginine. Residues Ser-537, Ser-547, Ser-549, Ser-551, and Ser-556 each carry the phosphoserine modification. Residues 595–607 (KDTETRERMEAME) are compositionally biased toward basic and acidic residues. 2 positions are modified to phosphoserine: Ser-631 and Ser-655. Phosphothreonine occurs at positions 658 and 671. The tract at residues 681-731 (RLQMQMHLRGLQNSASDLRGQLQQLRKLQLQNQESVRALLKRTEAELSMRV) is interaction with SNAP25. Coiled-coil stretches lie at residues 688–708 (LRGL…LRKL) and 760–780 (EELI…IQRD). Phosphoserine is present on residues Ser-878 and Ser-900. Disordered regions lie at residues 891-949 (GLDF…ERDW) and 983-1065 (DCAS…VVTS). Thr-918 is modified (phosphothreonine). Ser-1021 is modified (phosphoserine). Positions 1036 to 1045 (KSPPPPPPRR) are enriched in pro residues. Phosphoserine occurs at positions 1077 and 1094. The disordered stretch occupies residues 1141-1163 (SRLKAAQGPAGSPDKGKHGKQRT).

It belongs to the SRCIN1 family. Interacts with BCAR1/p130Cas through its C-terminal domain and with CSK, CTTN and SRC. Also interacts with MAPRE3/EB3, SORBS3/vinexin and the N-terminal coiled-coil region of SNAP25. Tyrosine-phosphorylated in response to EGF and to cell adhesion to integrin ligands. As to expression, expressed exclusively in brain. Abundant in telencephalon and expressed moderately in cerebellum, hypothalamus, thalamus, superior and inferior colliculi, and olfactory bulb. No expression detected in medulla oblongata, spinal cord or pituitary gland. Enriched in the neuropil rather than soma in the thalamus, corpus striatum and cerebral cortex. Detected in astrocytes.

It is found in the cytoplasm. The protein resides in the cytoskeleton. The protein localises to the cell projection. It localises to the axon. Its subcellular location is the dendrite. It is found in the presynapse. The protein resides in the postsynapse. The protein localises to the postsynaptic density. Functionally, acts as a negative regulator of SRC by activating CSK which inhibits SRC activity and downstream signaling, leading to impaired cell spreading and migration. Regulates dendritic spine morphology. Involved in calcium-dependent exocytosis. May play a role in neurotransmitter release or synapse maintenance. The sequence is that of SRC kinase signaling inhibitor 1 from Rattus norvegicus (Rat).